Here is a 603-residue protein sequence, read N- to C-terminus: Shugoshin (603 aa).

Residues 11 to 74 (HIQELQNILD…NVQLRSQVSL (64 aa)) are a coiled coil. Disordered stretches follow at residues 112–164 (ESLP…RSST) and 201–227 (NEID…SNRR). Low complexity-rich tracts occupy residues 146–157 (SVSTGSAHSTSS) and 201–214 (NEID…DNLL). Residues 218 to 227 (PHKKRKSNRR) show a composition bias toward basic residues. The stretch at 304-325 (KQDILDETEKRDTAVNQKKKLE) forms a coiled coil. The segment at 331-399 (PVEELSSSKN…ESVDFDRPRR (69 aa)) is disordered. A compositionally biased stretch (basic residues) spans 362 to 376 (KVKHSMKSRKPKKNK). Residues 431-451 (NIQDLQVKYKKSKKVLEKELK) are a coiled coil. Positions 455-467 (KAMKSPKKNEKTF) are enriched in basic and acidic residues. Disordered regions lie at residues 455-519 (KAMK…HSSF) and 583-603 (HNDT…KNKA). A compositionally biased stretch (low complexity) spans 483–512 (RPSSTHSTSSVDAECSHNNSHSENINSSIN). Over residues 583–593 (HNDTNKSSPKT) the composition is skewed to polar residues. Over residues 594–603 (YRSRSRKNKA) the composition is skewed to basic residues.

The protein belongs to the shugoshin family.

The protein resides in the nucleus. It localises to the chromosome. The protein localises to the centromere. In terms of biological role, plays a central role in chromosome cohesion during cell division by preventing premature dissociation of cohesin complex from centromeres after prophase, when most of cohesin complex dissociates from chromosomes arms. This chain is Shugoshin (SGO1), found in Candida glabrata (strain ATCC 2001 / BCRC 20586 / JCM 3761 / NBRC 0622 / NRRL Y-65 / CBS 138) (Yeast).